The following is a 355-amino-acid chain: 3-dehydroquinate synthase (355 aa).

Residues 98–102 (GVVGD), 122–123 (TT), K135, K144, and 162–165 (TLDT) contribute to the NAD(+) site. Zn(2+) contacts are provided by E177, H240, and H257.

Belongs to the sugar phosphate cyclases superfamily. Dehydroquinate synthase family. The cofactor is Co(2+). Requires Zn(2+) as cofactor. NAD(+) is required as a cofactor.

The protein localises to the cytoplasm. It carries out the reaction 7-phospho-2-dehydro-3-deoxy-D-arabino-heptonate = 3-dehydroquinate + phosphate. Its pathway is metabolic intermediate biosynthesis; chorismate biosynthesis; chorismate from D-erythrose 4-phosphate and phosphoenolpyruvate: step 2/7. Catalyzes the conversion of 3-deoxy-D-arabino-heptulosonate 7-phosphate (DAHP) to dehydroquinate (DHQ). This is 3-dehydroquinate synthase from Dictyoglomus turgidum (strain DSM 6724 / Z-1310).